Reading from the N-terminus, the 328-residue chain is tRNA dimethylallyltransferase (328 aa).

19-26 provides a ligand contact to ATP; the sequence is GPTASGKT. Substrate is bound at residue 21–26; that stretch reads TASGKT. Interaction with substrate tRNA stretches follow at residues 50–53, 174–178, and 257–262; these read DSAL, QRIQR, and RCVGYR.

This sequence belongs to the IPP transferase family. Monomer. It depends on Mg(2+) as a cofactor.

The enzyme catalyses adenosine(37) in tRNA + dimethylallyl diphosphate = N(6)-dimethylallyladenosine(37) in tRNA + diphosphate. Its function is as follows. Catalyzes the transfer of a dimethylallyl group onto the adenine at position 37 in tRNAs that read codons beginning with uridine, leading to the formation of N6-(dimethylallyl)adenosine (i(6)A). The protein is tRNA dimethylallyltransferase of Leptothrix cholodnii (strain ATCC 51168 / LMG 8142 / SP-6) (Leptothrix discophora (strain SP-6)).